The chain runs to 53 residues: Large ribosomal subunit protein eL40 (53 aa).

This sequence belongs to the eukaryotic ribosomal protein eL40 family.

This Pyrobaculum calidifontis (strain DSM 21063 / JCM 11548 / VA1) protein is Large ribosomal subunit protein eL40.